A 151-amino-acid chain; its full sequence is Large ribosomal subunit protein bL9 (151 aa).

This sequence belongs to the bacterial ribosomal protein bL9 family.

Functionally, binds to the 23S rRNA. This chain is Large ribosomal subunit protein bL9, found in Prochlorococcus marinus (strain MIT 9515).